Here is a 101-residue protein sequence, read N- to C-terminus: Large ribosomal subunit protein uL23 (101 aa).

This sequence belongs to the universal ribosomal protein uL23 family. Part of the 50S ribosomal subunit. Contacts protein L29, and trigger factor when it is bound to the ribosome.

One of the early assembly proteins it binds 23S rRNA. One of the proteins that surrounds the polypeptide exit tunnel on the outside of the ribosome. Forms the main docking site for trigger factor binding to the ribosome. In Leptospira biflexa serovar Patoc (strain Patoc 1 / Ames), this protein is Large ribosomal subunit protein uL23.